The primary structure comprises 409 residues: LL-diaminopimelate aminotransferase (409 aa).

Substrate contacts are provided by Tyr-15 and Gly-42. Pyridoxal 5'-phosphate contacts are provided by residues Tyr-72, 108–109, Tyr-132, Asn-186, Tyr-217, and 245–247; these read AK and SFS. Substrate-binding residues include Lys-109, Tyr-132, and Asn-186. Lys-248 bears the N6-(pyridoxal phosphate)lysine mark. Pyridoxal 5'-phosphate contacts are provided by Arg-256 and Asn-291. 2 residues coordinate substrate: Asn-291 and Arg-386.

It belongs to the class-I pyridoxal-phosphate-dependent aminotransferase family. LL-diaminopimelate aminotransferase subfamily. Homodimer. It depends on pyridoxal 5'-phosphate as a cofactor.

The enzyme catalyses (2S,6S)-2,6-diaminopimelate + 2-oxoglutarate = (S)-2,3,4,5-tetrahydrodipicolinate + L-glutamate + H2O + H(+). The protein operates within amino-acid biosynthesis; L-lysine biosynthesis via DAP pathway; LL-2,6-diaminopimelate from (S)-tetrahydrodipicolinate (aminotransferase route): step 1/1. Functionally, involved in the synthesis of meso-diaminopimelate (m-DAP or DL-DAP), required for both lysine and peptidoglycan biosynthesis. Catalyzes the direct conversion of tetrahydrodipicolinate to LL-diaminopimelate. This chain is LL-diaminopimelate aminotransferase, found in Desulforapulum autotrophicum (strain ATCC 43914 / DSM 3382 / VKM B-1955 / HRM2) (Desulfobacterium autotrophicum).